The following is a 291-amino-acid chain: Taste receptor type 2 member 16 (291 aa).

Residue Met1 is a topological domain, extracellular. A helical membrane pass occupies residues 2 to 22; that stretch reads IPIQLTVFFMIIYVLESLTII. The Cytoplasmic segment spans residues 23 to 41; the sequence is VQSSLIVAVLGREWLQVRR. A helical transmembrane segment spans residues 42–62; sequence LMPVDMILISLGISRFCLQWA. The Extracellular segment spans residues 63–84; that stretch reads SMLNNFCSYLNLNYVLCNLTIT. A glycan (N-linked (GlcNAc...) asparagine) is linked at Asn80. Residues 85-105 form a helical membrane-spanning segment; sequence WEFFNILTFWLNSLLTVFYCI. The Cytoplasmic portion of the chain corresponds to 106-125; it reads KVSSFTHHIFLWVRWRILRW. A helical membrane pass occupies residues 126-146; it reads FPWILLGSLTIACVTIIPSAI. Over 147–182 the chain is Extracellular; the sequence is GNYIQIQLLTMEHLPRNSTVTDRLEKFHQYQFQSHT. An N-linked (GlcNAc...) asparagine glycan is attached at Asn163. Residues 183 to 203 form a helical membrane-spanning segment; sequence VALVIPFILFLASTILLMASL. Over 204 to 228 the chain is Cytoplasmic; the sequence is TKQIQHHSTGHCNPSMKAHFTALRS. The helical transmembrane segment at 229-249 threads the bilayer; it reads LAILFIVFTSYFLIILITIIG. The Extracellular segment spans residues 250–257; sequence TLFDKRCW. The helical transmembrane segment at 258–278 threads the bilayer; sequence LWVWEAFVYAFILMHSTSLML. Topologically, residues 279 to 291 are cytoplasmic; it reads SSPTLKRILKGKC.

The protein belongs to the G-protein coupled receptor T2R family. Interacts with RTP3 and RTP4.

It is found in the cell membrane. Its function is as follows. Receptor that may play a role in the perception of bitterness and is gustducin-linked. May function as a bitter taste receptor for the phytonutrient beta glucopyranosides, some of which are toxic and some of which lower the risk of cancer and cardiovascular disease. The activity of this receptor may stimulate alpha gustducin, mediate PLC-beta-2 activation and lead to the gating of TRPM5. The sequence is that of Taste receptor type 2 member 16 (TAS2R16) from Pongo pygmaeus (Bornean orangutan).